Here is a 537-residue protein sequence, read N- to C-terminus: Putative cysteine ligase BshC (537 aa).

Residues 422-450 (IEKVEGMIEQQRRLYQDLLDEVAGNQNNI) are a coiled coil.

It belongs to the BshC family.

In terms of biological role, involved in bacillithiol (BSH) biosynthesis. May catalyze the last step of the pathway, the addition of cysteine to glucosamine malate (GlcN-Mal) to generate BSH. This Staphylococcus aureus (strain MRSA252) protein is Putative cysteine ligase BshC.